An 89-amino-acid chain; its full sequence is Small ribosomal subunit protein uS15 (89 aa).

The protein belongs to the universal ribosomal protein uS15 family. Part of the 30S ribosomal subunit. Forms a bridge to the 50S subunit in the 70S ribosome, contacting the 23S rRNA.

One of the primary rRNA binding proteins, it binds directly to 16S rRNA where it helps nucleate assembly of the platform of the 30S subunit by binding and bridging several RNA helices of the 16S rRNA. In terms of biological role, forms an intersubunit bridge (bridge B4) with the 23S rRNA of the 50S subunit in the ribosome. The protein is Small ribosomal subunit protein uS15 of Buchnera aphidicola subsp. Acyrthosiphon pisum (strain 5A).